The sequence spans 227 residues: Transmembrane emp24 domain-containing protein 1 (227 aa).

The N-terminal stretch at 1-23 (MMAAGAALALALWLLMPPVEVGG) is a signal peptide. Over 24 to 194 (AGPPPIQDGE…LQEGNLERVN (171 aa)) the chain is Extracellular. In terms of domain architecture, GOLD spans 43–125 (KQCFYQSAPA…EKLVFFELIF (83 aa)). Residues 145-170 (EMLDVKMEDIKESIETMRTRLERSIQ) adopt a coiled-coil conformation. A helical membrane pass occupies residues 195 to 215 (FWSAVNVAVLLLVAVLQVCTL). At 216–227 (KRFFQDKRPVPT) the chain is on the cytoplasmic side. A COPII vesicle coat-binding motif is present at residues 218-219 (FF). A COPI vesicle coat-binding motif is present at residues 218–227 (FFQDKRPVPT).

Belongs to the EMP24/GP25L family. Homodimer in endoplasmic reticulum, endoplasmic reticulum-Golgi intermediate compartment and cis-Golgi network. Interacts with IL1RL1. Interacts with RNF26; this interaction is important to modulate innate immune signaling through the cGAS-STING pathway. As to expression, widely expressed.

The protein localises to the cell membrane. Its subcellular location is the endoplasmic reticulum membrane. The protein resides in the golgi apparatus. It localises to the cis-Golgi network membrane. It is found in the endoplasmic reticulum-Golgi intermediate compartment membrane. Functionally, potential role in vesicular protein trafficking, mainly in the early secretory pathway. May act as a cargo receptor at the lumenal side for incorporation of secretory cargo molecules into transport vesicles and may be involved in vesicle coat formation at the cytoplasmic side. Plays a positive role in IL-33-mediated IL-8 and IL-6 production by interacting with interleukin-33 receptor IL1RL1. Also plays a role in the modulation of innate immune signaling through the cGAS-STING pathway by interacting with RNF26. This Homo sapiens (Human) protein is Transmembrane emp24 domain-containing protein 1 (TMED1).